The sequence spans 79 residues: ATP synthase subunit 9, mitochondrial (79 aa).

Helical transmembrane passes span 21–41 and 59–79; these read SGLI…ILAF and FALT…ILFI.

It belongs to the ATPase C chain family. As to quaternary structure, F-type ATPases have 2 components, CF(1) - the catalytic core - and CF(0) - the membrane proton channel. CF(1) has five subunits: alpha(3), beta(3), gamma(1), delta(1), epsilon(1). CF(0) has three main subunits: a, b and c.

The protein localises to the mitochondrion membrane. Mitochondrial membrane ATP synthase (F(1)F(0) ATP synthase or Complex V) produces ATP from ADP in the presence of a proton gradient across the membrane which is generated by electron transport complexes of the respiratory chain. F-type ATPases consist of two structural domains, F(1) - containing the extramembraneous catalytic core and F(0) - containing the membrane proton channel, linked together by a central stalk and a peripheral stalk. During catalysis, ATP synthesis in the catalytic domain of F(1) is coupled via a rotary mechanism of the central stalk subunits to proton translocation. Part of the complex F(0) domain. A homomeric c-ring of probably 10 subunits is part of the complex rotary element. In Acanthamoeba castellanii (Amoeba), this protein is ATP synthase subunit 9, mitochondrial (ATP9).